A 348-amino-acid chain; its full sequence is MTPFNPIDHPHRRYNPLTGQWVLVSPHRAKRPWQGAQETPSQQMLPAHDPDCFLCAGNTRVTGDKNPDYKGTYVFTNDFAALMADTPDAPDSHDPLMRCQSARGTSRVICFSPDHSKTLPELSLPALTEIVRTWQTQTAELGKTYPWVQVFENKGAAMGCSNPHPHGQVWANSFLPNEAEREDRLQKAYFAEQRSPMLVDYVQRELADGSRTVVETEHWLAVVPYWAAWPFETLLLPKTHVLRITDLSDEQRDSLALALKKLTSRYDNLFQCSFPYSMGWHGAPFNGEENAHWQLHAHFYPPLLRSATVRKFMVGYEMLAETQRDLTAEQAAERLRAVSDIHFRESGV.

UDP-alpha-D-glucose is bound at residue 28 to 31; that stretch reads RAKR. Cysteine 52 and cysteine 55 together coordinate Zn(2+). Residues valine 61 and 77-78 each bind UDP-alpha-D-glucose; that span reads ND. Histidine 115 is a Zn(2+) binding site. UDP-alpha-D-glucose contacts are provided by residues asparagine 153 and 159–161; that span reads GCS. Histidine 164 lines the Zn(2+) pocket. Residue histidine 166 is the Tele-UMP-histidine intermediate of the active site. Glutamine 168 lines the UDP-alpha-D-glucose pocket. Glutamate 182, histidine 281, histidine 296, and histidine 298 together coordinate Fe cation. UDP-alpha-D-glucose contacts are provided by residues 311 to 312, 316 to 317, and glutamine 323; these read KF and YE.

This sequence belongs to the galactose-1-phosphate uridylyltransferase type 1 family. Zn(2+) is required as a cofactor.

It catalyses the reaction alpha-D-galactose 1-phosphate + UDP-alpha-D-glucose = alpha-D-glucose 1-phosphate + UDP-alpha-D-galactose. The protein operates within carbohydrate metabolism; galactose metabolism. The polypeptide is Galactose-1-phosphate uridylyltransferase (galT) (Salmonella typhimurium (strain LT2 / SGSC1412 / ATCC 700720)).